Consider the following 176-residue polypeptide: GTP-dependent dephospho-CoA kinase (176 aa).

GTP is bound by residues aspartate 47, valine 48, aspartate 66, and glutamate 125.

It belongs to the GTP-dependent DPCK family.

The catalysed reaction is 3'-dephospho-CoA + GTP = GDP + CoA + H(+). It functions in the pathway cofactor biosynthesis; coenzyme A biosynthesis. Catalyzes the GTP-dependent phosphorylation of the 3'-hydroxyl group of dephosphocoenzyme A to form coenzyme A (CoA). The chain is GTP-dependent dephospho-CoA kinase from Methanocella arvoryzae (strain DSM 22066 / NBRC 105507 / MRE50).